A 509-amino-acid polypeptide reads, in one-letter code: ATP synthase subunit beta (509 aa).

Residue 167-174 participates in ATP binding; it reads GGAGVGKT. A disordered region spans residues 476–509; the sequence is ESLGAKMEDTSGDGAPAQSDSKSDSKGDDADKDA. Residues 496–509 are compositionally biased toward basic and acidic residues; it reads SKSDSKGDDADKDA.

It belongs to the ATPase alpha/beta chains family. As to quaternary structure, F-type ATPases have 2 components, CF(1) - the catalytic core - and CF(0) - the membrane proton channel. CF(1) has five subunits: alpha(3), beta(3), gamma(1), delta(1), epsilon(1). CF(0) has three main subunits: a(1), b(2) and c(9-12). The alpha and beta chains form an alternating ring which encloses part of the gamma chain. CF(1) is attached to CF(0) by a central stalk formed by the gamma and epsilon chains, while a peripheral stalk is formed by the delta and b chains.

The protein localises to the cell membrane. The enzyme catalyses ATP + H2O + 4 H(+)(in) = ADP + phosphate + 5 H(+)(out). Produces ATP from ADP in the presence of a proton gradient across the membrane. The catalytic sites are hosted primarily by the beta subunits. The polypeptide is ATP synthase subunit beta (Mycobacterium sp. (strain KMS)).